The following is a 433-amino-acid chain: Trigger factor (433 aa).

The region spanning 165-250 is the PPIase FKBP-type domain; the sequence is GDSAIIDFEG…LHNIQEKVKV (86 aa).

It belongs to the FKBP-type PPIase family. Tig subfamily.

The protein localises to the cytoplasm. It catalyses the reaction [protein]-peptidylproline (omega=180) = [protein]-peptidylproline (omega=0). In terms of biological role, involved in protein export. Acts as a chaperone by maintaining the newly synthesized protein in an open conformation. Functions as a peptidyl-prolyl cis-trans isomerase. In Sulfurimonas denitrificans (strain ATCC 33889 / DSM 1251) (Thiomicrospira denitrificans (strain ATCC 33889 / DSM 1251)), this protein is Trigger factor.